The primary structure comprises 457 residues: tRNA modification GTPase MnmE (457 aa).

Positions 24, 81, and 121 each coordinate (6S)-5-formyl-5,6,7,8-tetrahydrofolate. The TrmE-type G domain maps to 218 to 380 (GIKIVITGKP…LLKYLTKIIS (163 aa)). N228 contacts K(+). GTP is bound by residues 228–233 (NVGKSS), 247–253 (TNIAGTT), 272–275 (DTAG), and 338–341 (NKAD). S232 contacts Mg(2+). Residues T247, I249, and T252 each contribute to the K(+) site. T253 is a binding site for Mg(2+). (6S)-5-formyl-5,6,7,8-tetrahydrofolate is bound at residue K457.

This sequence belongs to the TRAFAC class TrmE-Era-EngA-EngB-Septin-like GTPase superfamily. TrmE GTPase family. In terms of assembly, homodimer. Heterotetramer of two MnmE and two MnmG subunits. Requires K(+) as cofactor.

The protein localises to the cytoplasm. Exhibits a very high intrinsic GTPase hydrolysis rate. Involved in the addition of a carboxymethylaminomethyl (cmnm) group at the wobble position (U34) of certain tRNAs, forming tRNA-cmnm(5)s(2)U34. This Baumannia cicadellinicola subsp. Homalodisca coagulata protein is tRNA modification GTPase MnmE.